Here is a 310-residue protein sequence, read N- to C-terminus: tRNA-cytidine(32) 2-sulfurtransferase (310 aa).

The PP-loop motif motif lies at 45 to 50 (SGGKDS). Residues cysteine 120, cysteine 123, and cysteine 211 each coordinate [4Fe-4S] cluster.

It belongs to the TtcA family. Homodimer. It depends on Mg(2+) as a cofactor. [4Fe-4S] cluster is required as a cofactor.

It localises to the cytoplasm. It carries out the reaction cytidine(32) in tRNA + S-sulfanyl-L-cysteinyl-[cysteine desulfurase] + AH2 + ATP = 2-thiocytidine(32) in tRNA + L-cysteinyl-[cysteine desulfurase] + A + AMP + diphosphate + H(+). It participates in tRNA modification. Functionally, catalyzes the ATP-dependent 2-thiolation of cytidine in position 32 of tRNA, to form 2-thiocytidine (s(2)C32). The sulfur atoms are provided by the cysteine/cysteine desulfurase (IscS) system. This chain is tRNA-cytidine(32) 2-sulfurtransferase, found in Shewanella baltica (strain OS185).